The primary structure comprises 136 residues: ATP synthase epsilon chain, plastid (136 aa).

It belongs to the ATPase epsilon chain family. F-type ATPases have 2 components, CF(1) - the catalytic core - and CF(0) - the membrane proton channel. CF(1) has five subunits: alpha(3), beta(3), gamma(1), delta(1), epsilon(1). CF(0) has three main subunits: a, b and c.

It localises to the plastid thylakoid membrane. Produces ATP from ADP in the presence of a proton gradient across the membrane. The protein is ATP synthase epsilon chain, plastid of Cuscuta reflexa (Southern Asian dodder).